Reading from the N-terminus, the 270-residue chain is Putative hydro-lyase Reut_A2449 (270 aa).

The protein belongs to the D-glutamate cyclase family.

This is Putative hydro-lyase Reut_A2449 from Cupriavidus pinatubonensis (strain JMP 134 / LMG 1197) (Cupriavidus necator (strain JMP 134)).